We begin with the raw amino-acid sequence, 460 residues long: GTPase Der (460 aa).

2 EngA-type G domains span residues 4–174 (PQVA…PRRE) and 184–361 (PKIA…AERS). GTP is bound by residues 10–17 (GRPNVGKS), 57–61 (DTGGL), 126–129 (NKAE), 190–197 (GRPNVGKS), 237–241 (DTAGI), and 302–305 (NKWD). The KH-like domain maps to 362-446 (RRIPTAELNQ…PIELVFRERE (85 aa)).

It belongs to the TRAFAC class TrmE-Era-EngA-EngB-Septin-like GTPase superfamily. EngA (Der) GTPase family. Associates with the 50S ribosomal subunit.

GTPase that plays an essential role in the late steps of ribosome biogenesis. The protein is GTPase Der of Thermomicrobium roseum (strain ATCC 27502 / DSM 5159 / P-2).